Consider the following 230-residue polypeptide: 2,3-bisphosphoglycerate-dependent phosphoglycerate mutase (230 aa).

Residues 8–15 (RHGESEWN), 21–22 (TG), R60, 87–90 (ERHY), K98, 114–115 (RR), and 183–184 (GN) contribute to the substrate site. The active-site Tele-phosphohistidine intermediate is H9. E87 functions as the Proton donor/acceptor in the catalytic mechanism.

Belongs to the phosphoglycerate mutase family. BPG-dependent PGAM subfamily.

It catalyses the reaction (2R)-2-phosphoglycerate = (2R)-3-phosphoglycerate. Its pathway is carbohydrate degradation; glycolysis; pyruvate from D-glyceraldehyde 3-phosphate: step 3/5. In terms of biological role, catalyzes the interconversion of 2-phosphoglycerate and 3-phosphoglycerate. The sequence is that of 2,3-bisphosphoglycerate-dependent phosphoglycerate mutase from Streptococcus uberis (strain ATCC BAA-854 / 0140J).